The sequence spans 326 residues: ATP phosphoribosyltransferase regulatory subunit (326 aa).

It belongs to the class-II aminoacyl-tRNA synthetase family. HisZ subfamily. In terms of assembly, heteromultimer composed of HisG and HisZ subunits.

The protein resides in the cytoplasm. It participates in amino-acid biosynthesis; L-histidine biosynthesis; L-histidine from 5-phospho-alpha-D-ribose 1-diphosphate: step 1/9. In terms of biological role, required for the first step of histidine biosynthesis. May allow the feedback regulation of ATP phosphoribosyltransferase activity by histidine. The chain is ATP phosphoribosyltransferase regulatory subunit from Streptococcus thermophilus (strain ATCC BAA-491 / LMD-9).